The primary structure comprises 1996 residues: Non-reducing polyketide synthase atnG (1996 aa).

The interval 9-245 is N-terminal acylcarrier protein transacylase (SAT) domain; sequence FLFGDQADAP…AELPAFGAVH (237 aa). In terms of domain architecture, Ketosynthase family 3 (KS3) spans 366 to 794; sequence SGSVAVIGMS…GGNSCFVLEE (429 aa). Residues cysteine 538, histidine 673, and histidine 713 each act as for beta-ketoacyl synthase activity in the active site. The malonyl-CoA:ACP transacylase (MAT) domain stretch occupies residues 891 to 1150; the sequence is AFAFTGQGAH…VKYTQAISHC (260 aa). The active-site For acyl/malonyl transferase activity is serine 982. The segment at 1263–1392 is N-terminal hotdog fold; that stretch reads HHLVSQDDNG…CCIRQTDEQD (130 aa). One can recognise a PKS/mFAS DH domain in the interval 1263–1569; that stretch reads HHLVSQDDNG…FRKMPRTTLH (307 aa). A product template (PT) domain region spans residues 1267–1568; sequence SQDDNGKEQS…RFRKMPRTTL (302 aa). Histidine 1295 acts as the Proton acceptor; for dehydratase activity in catalysis. Residues 1416 to 1569 form a C-terminal hotdog fold region; it reads ASGIANRFQG…FRKMPRTTLH (154 aa). The Proton donor; for dehydratase activity role is filled by aspartate 1481. The tract at residues 1573-1621 is disordered; sequence GKAVPPKPAKETSHPSVEATAPATTNGRSSATNAQAEAPAPPVNGSNGH. A compositionally biased stretch (polar residues) spans 1594–1607; it reads PATTNGRSSATNAQ. A Carrier domain is found at 1620–1697; sequence GHRKTVESVL…DAQRQLRTLE (78 aa). O-(pantetheine 4'-phosphoryl)serine is present on serine 1657. Positions 1725–1923 are thioesterase (TE) domain; it reads KRECNVVLMQ…ERTFVVWAKK (199 aa).

It functions in the pathway secondary metabolite biosynthesis; terpenoid biosynthesis. In terms of biological role, non-reducing polyketide synthase; part of the gene cluster that mediates the biosynthesis of the meroterpenoids arthripenoids. The pathway begins with the HR-PKS atnH that catalyzes two chain-extension steps to form a reduced triketide, which then primes the SAT domain in the NR-PKS atnG to initiate three more cycles of extension to give a linear hexaketide corresponding to the polyketide part of arthripenoids. The FAD-dependent monooxygenase atnJ then performs an oxidative decarboxylation at C11 of the atnH/atnG product, via an electrophilic aromatic hydroxylation with concomitant ipso-decarboxylation. The membrane-bound polyprenyl transferase atnF then introduces a farnesyl group before the FAD-dependent monooxygenase atnK functions as the first epoxidase on terminal C12'-C13' olefin, followed by a second epoxidation on C7'-C8' catalyzed by atnA. The terpene cyclase/mutase atnI then initiates the sequential tricyclic ring formation through protonation of the terminal epoxide and catalyzes the regioselective and stereoselective 6/6/6-tricyclic ring formation. The cytochrome P450 monooxygenase atnM is responsible for hydroxylating both C1' and C10'. The next steps may involve ketoreduction and acetyl transfer by the ketoreductase atnB and the acetyltransferase atnC, and lead to the production of arthripenoid B, the final biosynthetic product of the atn cluster. The hydroquinone moiety in arthripenoid B is prone to undergo spontaneous oxidation to afford a benzoquinone compound, a key intermediate for generating structure diversity. For instance, addition of a cysteine followed by ring contraction gives arthripenoid A, tautomerization gives the main product arthripenoid C, addition of a molecular of water or amine affords arthripenoid D or E, respectively, and loss of one water forms arthripenoid F. This is Non-reducing polyketide synthase atnG from Arthrinium sp.